The chain runs to 251 residues: Orcokinin peptides type A (251 aa).

A signal peptide spans 1–20 (MTAQMFTIALLLSLSAIAAA). 3 propeptides span residues 21–46 (GTIK…GAPV), 225–231 (DYDVFPD), and 249–251 (NVE).

This sequence belongs to the orcokinin family.

It is found in the secreted. Its function is as follows. Myotropic peptides that enhance both the frequency and amplitude of spontaneous hindgut contractions. The sequence is that of Orcokinin peptides type A from Procambarus clarkii (Red swamp crayfish).